Reading from the N-terminus, the 55-residue chain is Large ribosomal subunit protein bL33 (55 aa).

Belongs to the bacterial ribosomal protein bL33 family.

This Pseudarthrobacter chlorophenolicus (strain ATCC 700700 / DSM 12829 / CIP 107037 / JCM 12360 / KCTC 9906 / NCIMB 13794 / A6) (Arthrobacter chlorophenolicus) protein is Large ribosomal subunit protein bL33.